The following is a 294-amino-acid chain: Metallophosphoesterase MPPED2 (294 aa).

5 residues coordinate Mn(2+): aspartate 65, histidine 67, aspartate 86, asparagine 117, and histidine 213. Position 117 to 118 (117 to 118) interacts with GMP; the sequence is NH. GMP-binding positions include 225–226 and 252–255; these read KE and GIHE. Histidine 254 provides a ligand contact to Mn(2+).

The protein belongs to the UPF0046 family. As to quaternary structure, homodimer. It depends on Mn(2+) as a cofactor. Requires Co(2+) as cofactor.

Inhibited by nmolar levels of AMP and GMP. Its function is as follows. Displays low metallophosphoesterase activity (in vitro). May play a role in the development of the nervous system. This chain is Metallophosphoesterase MPPED2 (Mpped2), found in Mus musculus (Mouse).